Consider the following 196-residue polypeptide: Peptidyl-tRNA hydrolase (196 aa).

Tyr-17 contacts tRNA. His-22 (proton acceptor) is an active-site residue. TRNA-binding residues include Phe-68, Asn-70, and Asn-116.

This sequence belongs to the PTH family. Monomer.

The protein localises to the cytoplasm. It carries out the reaction an N-acyl-L-alpha-aminoacyl-tRNA + H2O = an N-acyl-L-amino acid + a tRNA + H(+). Its function is as follows. Hydrolyzes ribosome-free peptidyl-tRNAs (with 1 or more amino acids incorporated), which drop off the ribosome during protein synthesis, or as a result of ribosome stalling. Catalyzes the release of premature peptidyl moieties from peptidyl-tRNA molecules trapped in stalled 50S ribosomal subunits, and thus maintains levels of free tRNAs and 50S ribosomes. The sequence is that of Peptidyl-tRNA hydrolase from Serratia proteamaculans (strain 568).